The following is a 983-amino-acid chain: MEMKLPGQEGFEASSAPRNIPSGELDSNPDPGTGPSPDGPSDTESKELGVPKDPLLFIQLNELLGWPQALEWRETGSSSASLLLDMGEMPSITLSTHLHHRWVLFEEKLEVAAGRWSAPHVPTLALPSLQKLRSLLAEGLVLLDCPAQSLLELVEQVTRVESLSPELRGQLQALLLQRPQHYNQTTGTRPCWGSTHPRKASDNEEAPLREQCQNPLRQKLPPGAEAGTVLAGELGFLAQPLGAFVRLRNPVVLGSLTEVSLPSRFFCLLLGPCMLGKGYHEMGRAAAVLLSDPQFQWSVRRASNLHDLLAALDAFLEEVTVLPPGRWDPTARIPPPKCLPSQHKRLPSQQREIRGPAVPRLTSAEDRHRHGPHAHSPELQRTGRLFGGLIQDVRRKVPWYPSDFLDALHLQCFSAVLYIYLATVTNAITFGGLLGDATDGAQGVLESFLGTAVAGAAFCLMAGQPLTILSSTGPVLVFERLLFSFSRDYSLDYLPFRLWVGIWVATFCLVLVATEASVLVRYFTRFTEEGFCALISLIFIYDAVGKMLNLTHTYPIQKPGSSAYGCLCQYPGPGGNESQWIRTRPKDRDDIVSMDLGLINASLLPPPECTRQGGHPRGPGCHTVPDIAFFSLLLFLTSFFFAMALKCVKTSRFFPSVVRKGLSDFSSVLAILLGCGLDAFLGLATPKLMVPREFKPTLPGRGWLVSPFGANPWWWSVAAALPALLLSILIFMDQQITAVILNRMEYRLQKGAGFHLDLFCVAVLMLLTSALGLPWYVSATVISLAHMDSLRRESRACAPGERPNFLGIREQRLTGLVVFILTGASIFLAPVLKFIPMPVLYGIFLYMGVAALSSIQFTNRVKLLLMPAKHQPDLLLLRHVPLTRVHLFTAIQLACLGLLWIIKSTPAAIIFPLMLLGLVGVRKALERVFSPQELLWLDELMPEEERSIPEKGLEPEHSFSGSDSEDSELMYQPKAPEINISVN.

Residues 1 to 48 are disordered; sequence MEMKLPGQEGFEASSAPRNIPSGELDSNPDPGTGPSPDGPSDTESKEL. Asparagine 183 carries N-linked (GlcNAc...) asparagine glycosylation. Disordered regions lie at residues 186-205 and 332-357; these read TGTR…DNEE and RIPP…RGPA. 4 helical membrane-spanning segments follow: residues 415–435, 443–463, 500–520, and 530–550; these read AVLY…GLLG, GVLE…LMAG, VGIW…SVLV, and GFCA…MLNL. The tract at residues 415–983 is membrane (anion exchange); that stretch reads AVLYIYLATV…KAPEINISVN (569 aa). N-linked (GlcNAc...) asparagine glycosylation is found at asparagine 576 and asparagine 600. 7 consecutive transmembrane segments (helical) span residues 624–644, 665–685, 712–732, 758–778, 815–835, 837–857, and 899–919; these read VPDI…FAMA, FSSV…GLAT, PWWW…LIFM, LFCV…WYVS, GLVV…LKFI, MPVL…SIQF, and LWII…LGLV. Positions 946 to 957 are enriched in basic and acidic residues; it reads RSIPEKGLEPEH. The segment at 946–983 is disordered; the sequence is RSIPEKGLEPEHSFSGSDSEDSELMYQPKAPEINISVN. Asparagine 979 is a glycosylation site (N-linked (GlcNAc...) asparagine).

The protein belongs to the anion exchanger (TC 2.A.31) family. Kidney specific.

It is found in the basolateral cell membrane. The catalysed reaction is 2 hydrogencarbonate(out) + chloride(in) + Na(+)(out) = 2 hydrogencarbonate(in) + chloride(out) + Na(+)(in). It carries out the reaction K(+)(in) + 2 hydrogencarbonate(in) + chloride(out) = K(+)(out) + 2 hydrogencarbonate(out) + chloride(in). The enzyme catalyses Li(+)(in) + 2 hydrogencarbonate(in) + chloride(out) = Li(+)(out) + 2 hydrogencarbonate(out) + chloride(in). It catalyses the reaction Rb(+)(in) + 2 hydrogencarbonate(in) + chloride(out) = Rb(+)(out) + 2 hydrogencarbonate(out) + chloride(in). The catalysed reaction is Cs(+)(in) + 2 hydrogencarbonate(in) + chloride(out) = Cs(+)(out) + 2 hydrogencarbonate(out) + chloride(in). Electroneutral Cl(-)/HCO3(-) antiporter that favors chloride ion entry and efflux of hydrogencarbonate and sodium ion across the basolateral membrane and may participate in salivary secretion. Also mediates Cl(-)/HCO3(-) exchange activity in the presence of K(+) as well as Cs(+), Li(+), and Rb(+). Does not contribute to Cl(-)/HCO3(-) exchanger in the apical membrane of the upper villous epithelium. The chain is Anion exchange protein 4 from Homo sapiens (Human).